The chain runs to 69 residues: Putative F-box protein At2g33705 (69 aa).

In terms of domain architecture, F-box spans 14 to 59; the sequence is GVNLEQIPYDLVLEILLKLSAKSIARFRCVSKLWDSTFRSRYFTEL.

This chain is Putative F-box protein At2g33705, found in Arabidopsis thaliana (Mouse-ear cress).